The chain runs to 420 residues: ATP phosphoribosyltransferase regulatory subunit (420 aa).

Belongs to the class-II aminoacyl-tRNA synthetase family. HisZ subfamily. As to quaternary structure, heteromultimer composed of HisG and HisZ subunits.

It is found in the cytoplasm. Its pathway is amino-acid biosynthesis; L-histidine biosynthesis; L-histidine from 5-phospho-alpha-D-ribose 1-diphosphate: step 1/9. Functionally, required for the first step of histidine biosynthesis. May allow the feedback regulation of ATP phosphoribosyltransferase activity by histidine. The chain is ATP phosphoribosyltransferase regulatory subunit from Bacillus cereus (strain AH187).